The sequence spans 228 residues: L-ribulose-5-phosphate 4-epimerase UlaF (228 aa).

Residues 26–27 (GN), 43–44 (SG), and 72–73 (SS) contribute to the substrate site. Residues Asp74, His93, and His95 each coordinate Zn(2+). The Proton donor/acceptor role is filled by Asp118. Position 167 (His167) interacts with Zn(2+). Tyr225 functions as the Proton donor/acceptor in the catalytic mechanism.

It belongs to the aldolase class II family. AraD/FucA subfamily. The cofactor is Zn(2+).

The enzyme catalyses L-ribulose 5-phosphate = D-xylulose 5-phosphate. Its pathway is cofactor degradation; L-ascorbate degradation; D-xylulose 5-phosphate from L-ascorbate: step 4/4. Its function is as follows. Catalyzes the isomerization of L-ribulose 5-phosphate to D-xylulose 5-phosphate. Is involved in the anaerobic L-ascorbate utilization. The polypeptide is L-ribulose-5-phosphate 4-epimerase UlaF (Escherichia coli (strain K12 / MC4100 / BW2952)).